A 461-amino-acid chain; its full sequence is Ubiquinone hydroxylase UbiM (461 aa).

The protein belongs to the UbiH/COQ6 family. Requires FAD as cofactor.

It catalyses the reaction a 2-(all-trans-polyprenyl)phenol + NADPH + O2 + H(+) = a 3-(all-trans-polyprenyl)benzene-1,2-diol + NADP(+) + H2O. It carries out the reaction a 5-methoxy-2-methyl-3-(all-trans-polyprenyl)benzene-1,4-diol + AH2 + O2 = a 3-demethylubiquinol + A + H2O. It participates in cofactor biosynthesis; ubiquinone biosynthesis. Functionally, catalyzes the hydroxylation of three positions of the aromatic ring during ubiquinone biosynthesis. This Neisseria meningitidis serogroup C / serotype 2a (strain ATCC 700532 / DSM 15464 / FAM18) protein is Ubiquinone hydroxylase UbiM.